Reading from the N-terminus, the 201-residue chain is Ribonuclease HII (201 aa).

The RNase H type-2 domain occupies 10-200; the sequence is LIEAGCDEAG…LGDGQLELFS (191 aa). Aspartate 16, glutamate 17, and aspartate 108 together coordinate a divalent metal cation.

This sequence belongs to the RNase HII family. The cofactor is Mn(2+). Mg(2+) serves as cofactor.

The protein resides in the cytoplasm. The catalysed reaction is Endonucleolytic cleavage to 5'-phosphomonoester.. In terms of biological role, endonuclease that specifically degrades the RNA of RNA-DNA hybrids. In Bacteroides fragilis (strain YCH46), this protein is Ribonuclease HII.